Here is a 406-residue protein sequence, read N- to C-terminus: Phosphatidylinositol 5-phosphate 4-kinase type-2 alpha (406 aa).

N-acetylalanine is present on Ala-2. Thr-3 is modified (phosphothreonine). Ser-14 bears the Phosphoserine mark. The PIPK domain maps to 33–405 (ASDPLLSVLM…RFLDFIGHIL (373 aa)). The segment at 59–65 (VMLMPDD) is required for interaction with PIP5K1A. Lys-89 and Lys-145 each carry N6-acetyllysine. Positions 287–328 (EQEEVECEENEGEEEGESDGAHPIGTPPDSPGNTLNSSPPLA) are disordered. The span at 289–304 (EEVECEENEGEEEGES) shows a compositional bias: acidic residues.

Homodimer. Interacts with PIP4K2B; the interaction may regulate localization to the nucleus. Probably interacts with PIP5K1A; the interaction inhibits PIP5K1A kinase activity. In terms of processing, phosphorylated in tyrosines. Phosphorylation is induced by light and increases kinase activity.

It is found in the cell membrane. Its subcellular location is the nucleus. It localises to the lysosome. The protein resides in the cytoplasm. The protein localises to the photoreceptor inner segment. It is found in the cell projection. Its subcellular location is the cilium. It localises to the photoreceptor outer segment. The enzyme catalyses a 1,2-diacyl-sn-glycero-3-phospho-(1D-myo-inositol-5-phosphate) + ATP = a 1,2-diacyl-sn-glycero-3-phospho-(1D-myo-inositol-4,5-bisphosphate) + ADP + H(+). The catalysed reaction is 1,2-dihexadecanoyl-sn-glycero-3-phospho-(1D-myo-inositol-5-phosphate) + ATP = 1,2-dihexadecanoyl-sn-glycero-3-phospho-(1D-myo-inositol-4,5-bisphosphate) + ADP + H(+). It carries out the reaction 1,2-dihexadecanoyl-sn-glycero-3-phospho-(1D-myo-inositol-5-phosphate) + GTP = 1,2-dihexadecanoyl-sn-glycero-3-phospho-(1D-myo-inositol-4,5-bisphosphate) + GDP + H(+). In rod outer segments, activated by light. Catalyzes the phosphorylation of phosphatidylinositol 5-phosphate (PtdIns5P) on the fourth hydroxyl of the myo-inositol ring, to form phosphatidylinositol 4,5-bisphosphate (PtdIns(4,5)P2). Has both ATP- and GTP-dependent kinase activities. May exert its function by regulating the levels of PtdIns5P, which functions in the cytosol by increasing AKT activity and in the nucleus signals through ING2. May regulate the pool of cytosolic PtdIns5P in response to the activation of tyrosine phosphorylation. Required for lysosome-peroxisome membrane contacts and intracellular cholesterol transport through modulating peroxisomal PtdIns(4,5)P2 level. In collaboration with PIP4K2B, has a role in mediating autophagy in times of nutrient stress. Required for autophagosome-lysosome fusion and the regulation of cellular lipid metabolism. Negatively regulates insulin signaling through a catalytic-independent mechanism. PIP4Ks interact with PIP5Ks and suppress PIP5K-mediated PtdIns(4,5)P2 synthesis and insulin-dependent conversion to PtdIns(3,4,5)P3. May be involved in thrombopoiesis, and the terminal maturation of megakaryocytes and regulation of their size. The sequence is that of Phosphatidylinositol 5-phosphate 4-kinase type-2 alpha from Rattus norvegicus (Rat).